The sequence spans 170 residues: MGIVIGKIELNSEKQIIGELKKKIKGINLNVAQKVIMLSGNVASLKGNTLLKSQEKQILEILQSFKGLYDYTYGLKVEALDKIRRLENVYRYIRVIKGYPIKGRTKSNANTAKRQASPGGNKKLKIMDILKKKPTNRKERRIFNKIKKLQDKHNKQQQKNKKSKKWKTKK.

The disordered stretch occupies residues 130-170 (LKKKPTNRKERRIFNKIKKLQDKHNKQQQKNKKSKKWKTKK). Basic residues-rich tracts occupy residues 132–147 (KKPT…NKIK) and 155–170 (KQQQ…KTKK).

The protein belongs to the universal ribosomal protein uS13 family. Part of the small ribosomal subunit.

Its subcellular location is the mitochondrion. In terms of biological role, located at the top of the head of the small subunit, it contacts several helices of the small subunit rRNA. The sequence is that of Small ribosomal subunit protein uS13m (mrps13) from Dictyostelium citrinum (Slime mold).